Consider the following 565-residue polypeptide: NAD-dependent malic enzyme (565 aa).

Residue Y104 is the Proton donor of the active site. Residue R157 participates in NAD(+) binding. The Proton acceptor role is filled by K175. The a divalent metal cation site is built by E246, D247, and D270. Residues D270 and N418 each coordinate NAD(+).

Belongs to the malic enzymes family. In terms of assembly, homotetramer. Mg(2+) is required as a cofactor. Requires Mn(2+) as cofactor.

The enzyme catalyses (S)-malate + NAD(+) = pyruvate + CO2 + NADH. It catalyses the reaction oxaloacetate + H(+) = pyruvate + CO2. This chain is NAD-dependent malic enzyme, found in Shigella boydii serotype 18 (strain CDC 3083-94 / BS512).